A 269-amino-acid polypeptide reads, in one-letter code: Novel plant SNARE 13 (269 aa).

At 1–217 the chain is on the cytoplasmic side; it reads MASNLPMSPQ…IGRQVATDKC (217 aa). Positions 33-94 form a coiled coil; sequence DKIKDSTRQS…KQSMIKELNS (62 aa). S74 carries the phosphoserine modification. The t-SNARE coiled-coil homology domain maps to 146-208; that stretch reads MKRMDETDQA…KKASQLVKEI (63 aa). Residues 218-238 form a helical; Anchor for type IV membrane protein membrane-spanning segment; it reads IMGFLFLIVCGVVAIIIVKIV. Topologically, residues 239 to 269 are vesicular; the sequence is NPNNKDIRDIPGLAPPAQSRKLLYLRNQDYM.

Belongs to the novel plant SNARE family.

It is found in the membrane. In terms of biological role, vesicle trafficking protein that functions in the secretory pathway. In Arabidopsis thaliana (Mouse-ear cress), this protein is Novel plant SNARE 13 (NPSN13).